A 257-amino-acid polypeptide reads, in one-letter code: Putative B3 domain-containing protein At2g27410 (257 aa).

The tract at residues 5 to 50 is disordered; the sequence is ARTTKINHFRGTSTTQNPNRGLEPSPSSYVTRRSKEKRPINVEKRS. Over residues 8-35 the composition is skewed to polar residues; the sequence is TKINHFRGTSTTQNPNRGLEPSPSSYVT. A DNA-binding region (TF-B3) is located at residues 115–209; it reads TPDFLTEDET…KLCFALTPKN (95 aa). Residues 212-257 are disordered; that stretch reads RGNSLPGGDGASTSGESGQVPLPIPPARYSSNSGQGCSGESSSSSS. Residues 241–257 show a composition bias toward low complexity; sequence SSNSGQGCSGESSSSSS.

The protein resides in the nucleus. This is Putative B3 domain-containing protein At2g27410 from Arabidopsis thaliana (Mouse-ear cress).